The following is a 446-amino-acid chain: Tetratricopeptide repeat protein 23 (446 aa).

TPR repeat units lie at residues 45 to 78 (LHLCEERAKSYSSIREYKQAIQELVRCVALTKIC), 137 to 170 (LELFYTLGKALVSLQKFKEAWENLIKAERLSKEM), 186 to 219 (SRIKLSFAQLYQGQKRSKEAFPYYQKALEYTETT), and 356 to 389 (AETYRILGRADLAQGNNNGAHMKLKKCVQIETFL).

In terms of assembly, associated with the EvC complex composed of EFCAB7, IQCE, EVC2 and EVC.

The protein resides in the cell projection. Its subcellular location is the cilium. In terms of biological role, participates positively in the ciliary Hedgehog (Hh) signaling. The chain is Tetratricopeptide repeat protein 23 (Ttc23) from Rattus norvegicus (Rat).